Consider the following 626-residue polypeptide: Grainyhead-like protein 3 homolog (626 aa).

Residues 30 to 95 (EAWKTYLENP…QGKRYYHGME (66 aa)) are transcription activation. A Grh/CP2 DB domain is found at 226 to 460 (SLKSDFEYTL…DLETPPVLFI (235 aa)).

The protein belongs to the grh/CP2 family. Grainyhead subfamily. As to quaternary structure, homodimer, also forms heterodimers with GRHL1 and GRHL2. Interacts with LMO4. Expressed in brain, colon, pancreas, placenta and kidney. Isoform 1 is expressed in lung and tonsil. Isoform 2 is prostate-specific.

It is found in the nucleus. Its function is as follows. Transcription factor playing important roles in primary neurulation and in the differentiation of stratified epithelia of both ectodermal and endodermal origin. Binds directly to the consensus DNA sequence 5'-AACCGGTT-3' acting as an activator and repressor on distinct target genes. xhibits functional redundancy with GRHL2 in epidermal morphogenetic events and epidermal wound repair. Exhibits functional redundancy with GRHL2 in epidermal morphogenetic events and epidermal wound repair but is essential to form the epidermal barrier with TGM3 as critical direct target gene among others. Despite being dispensable during normal epidermal homeostasis in the adulthood, is again required for barrier repair after immune-mediated epidermal damage, regulates distinct gene batteries in embryonic epidermal differentiation and adult epidermal barrier reformation after injury. Plays unique and cooperative roles with GRHL2 in establishing distinct zones of primary neurulation. Essential for spinal closure, functions cooperatively with GRHL2 in closure 2 (forebrain/midbrain boundary) and posterior neuropore closure. Also required for proper development of the oral periderm. No genetic interaction with GRHL3, no functional cooperativity due to diverse target gene selectivity. The sequence is that of Grainyhead-like protein 3 homolog from Homo sapiens (Human).